We begin with the raw amino-acid sequence, 112 residues long: Large ribosomal subunit protein P2A (112 aa).

The interval G83 to D112 is disordered. Positions E89–E98 are enriched in basic and acidic residues.

This sequence belongs to the eukaryotic ribosomal protein P1/P2 family. In terms of assembly, P1 and P2 exist as dimers at the large ribosomal subunit. In terms of processing, phosphorylated.

Its function is as follows. Plays an important role in the elongation step of protein synthesis. In Zea mays (Maize), this protein is Large ribosomal subunit protein P2A (RPP2A).